A 354-amino-acid chain; its full sequence is Uroporphyrinogen decarboxylase (354 aa).

Substrate is bound by residues 27-31, D77, Y154, T209, and H327; that span reads RQAGR.

The protein belongs to the uroporphyrinogen decarboxylase family. In terms of assembly, homodimer.

The protein resides in the cytoplasm. The catalysed reaction is uroporphyrinogen III + 4 H(+) = coproporphyrinogen III + 4 CO2. The protein operates within porphyrin-containing compound metabolism; protoporphyrin-IX biosynthesis; coproporphyrinogen-III from 5-aminolevulinate: step 4/4. Functionally, catalyzes the decarboxylation of four acetate groups of uroporphyrinogen-III to yield coproporphyrinogen-III. The protein is Uroporphyrinogen decarboxylase of Salmonella paratyphi B (strain ATCC BAA-1250 / SPB7).